The sequence spans 463 residues: ATP-dependent protease ATPase subunit HslU (463 aa).

ATP-binding positions include Val-21, 63-68, Asp-276, Glu-341, and Arg-413; that span reads GVGKTE.

Belongs to the ClpX chaperone family. HslU subfamily. As to quaternary structure, a double ring-shaped homohexamer of HslV is capped on each side by a ring-shaped HslU homohexamer. The assembly of the HslU/HslV complex is dependent on binding of ATP.

The protein localises to the cytoplasm. In terms of biological role, ATPase subunit of a proteasome-like degradation complex; this subunit has chaperone activity. The binding of ATP and its subsequent hydrolysis by HslU are essential for unfolding of protein substrates subsequently hydrolyzed by HslV. HslU recognizes the N-terminal part of its protein substrates and unfolds these before they are guided to HslV for hydrolysis. This Thermotoga sp. (strain RQ2) protein is ATP-dependent protease ATPase subunit HslU.